The sequence spans 678 residues: MDMESWKLLRSVCVLSFLLGSCFVYQSLRVVDAQEDPKPAVTLQVDASNGGGRPIPETLFGIFFEEINHAGAGGLWAELVSNRGFEAGGQNTPSNIWPWSIVGDHSSIYVATDRSSCFERNKIALRMDVLCDSKGCPSGGVGVYNPGYWGMNIEEGKKYKVALYVRSTGDIDLSVSLTSSNGSRTLASEKIIASASDVSKWIKKEVLLEAKATDPSARLQLTTTKKGSIWIDQVSAMPVDTHKGHGFRNDLFQMMADIKPRFIRFPGGCFVEGEWLSNAFRWKETVGPWEERPGHFGDVWKYWTDDGLGHFEFFQMAEDIGAAPIWVFNNGISHNDEVETASIMPFVQEALDGIEFARGDANSTWGSVRAKMGRQEPFELKYVAIGNEDCGKTYYRGNYIVFYDAIKKAYPDIKIISNCDGSSHPLDHPADYYDYHIYTSASNLFSMYHQFDRTSRKGPKAFVSEYAVTGKDAGTGSLLASLAEAAFLIGLEKNSDIVEMASYAPLFVNTNDRRWNPDAIVFNSSHLYGTPSYWVQRFFAESSGATLLTSTLKGNSTSLVASAISWKNNGKDYIRIKAVNFGANSENMQVLVTGLDPNVMRVSGSKKTVLTSTNVMDENSFSQPEKVVPHESLLELAEEDMTVVLPPHSFSSFDLLKESAKIRMPISDSSSHQKTTTV.

Positions 1–33 (MDMESWKLLRSVCVLSFLLGSCFVYQSLRVVDA) are cleaved as a signal peptide. Residues 152–239 (NIEEGKKYKV…WIDQVSAMPV (88 aa)) form the CBM-cenC domain. N181, N362, N523, and N555 each carry an N-linked (GlcNAc...) asparagine glycan.

It belongs to the glycosyl hydrolase 51 family. As to expression, expressed in roots, leaves, flowers, stems, siliques and seedlings. Observed in zones of cell proliferation, the vascular system and floral abscission zones. Expressed in the guard cells in stems, in xylem vessels and parenchyma cells surrounding the vessels, in the cambium and in the phloem, but not in the secondary xylem.

The protein resides in the secreted. The protein localises to the extracellular space. Its subcellular location is the extracellular matrix. It carries out the reaction Hydrolysis of terminal non-reducing alpha-L-arabinofuranoside residues in alpha-L-arabinosides.. Functionally, may be involved in the coordinated dissolution of the cell wall matrix during abscission and in the secondary cell wall formation in xylem vessels. Prefers arabinoxylan, but may also use pectic arabinans as substrates. The chain is Alpha-L-arabinofuranosidase 1 (ASD1) from Arabidopsis thaliana (Mouse-ear cress).